The following is a 418-amino-acid chain: MLKKDMNIADFDPQLFQAIQDETRRQEEHIELIASENYTSPRVLEAQGSQLTNKYAEGYPGKRYYGGCEHVDIAEELAISRAKELFGATYANVQPHSGSQANAAVFMALLEGGDTVLGMSLAHGGHLTHGSHVSFSGKLYNSVQYGIDETTGKIDYAEVERLAVEHKPKMIIAGFSAYSGIIDWGKFREIADKVGAYLFVDMAHVAGLIAAGIYPNPLPHAHVVTTTTHKTLAGPRGGLILSAIDDEAIYKKLNSAVFPGGQGGPLMHVIAAKAVAFKEALEPEFTAYQEQVVVNAQAMAKTFIERGYDVVSGGTDNHLFLLDLISKDITGKDADAALGLANITVNKNSVPNDPRSPFVTSGLRIGSPAITRRGFKEAQAVELTNWMCDVLDDITNEGTIERVKNQVLELCAKFPVYG.

(6S)-5,6,7,8-tetrahydrofolate-binding positions include L121 and 125–127 (GHL). The residue at position 230 (K230) is an N6-(pyridoxal phosphate)lysine. 356 to 358 (SPF) provides a ligand contact to (6S)-5,6,7,8-tetrahydrofolate.

Belongs to the SHMT family. In terms of assembly, homodimer. Pyridoxal 5'-phosphate serves as cofactor.

The protein localises to the cytoplasm. The catalysed reaction is (6R)-5,10-methylene-5,6,7,8-tetrahydrofolate + glycine + H2O = (6S)-5,6,7,8-tetrahydrofolate + L-serine. It functions in the pathway one-carbon metabolism; tetrahydrofolate interconversion. Its pathway is amino-acid biosynthesis; glycine biosynthesis; glycine from L-serine: step 1/1. Its function is as follows. Catalyzes the reversible interconversion of serine and glycine with tetrahydrofolate (THF) serving as the one-carbon carrier. This reaction serves as the major source of one-carbon groups required for the biosynthesis of purines, thymidylate, methionine, and other important biomolecules. Also exhibits THF-independent aldolase activity toward beta-hydroxyamino acids, producing glycine and aldehydes, via a retro-aldol mechanism. This is Serine hydroxymethyltransferase from Shewanella woodyi (strain ATCC 51908 / MS32).